Reading from the N-terminus, the 354-residue chain is Guanine nucleotide-binding protein G(t) subunit alpha-3 (354 aa).

Residues 1 to 27 (MGSGISSESKESAKRSKELEKKLQEDA) form a disordered region. A lipid anchor (N-myristoyl glycine) is attached at G2. A compositionally biased stretch (basic and acidic residues) spans 8–27 (ESKESAKRSKELEKKLQEDA). Positions 32-354 (RTVKLLLLGA…KENLKDCGLF (323 aa)) constitute a G-alpha domain. Positions 35 to 48 (KLLLLGAGESGKST) are G1 motif. GTP-binding positions include 40–47 (GAGESGKS), 175–181 (LHSRVKT), 200–204 (DVGGQ), 269–272 (NKKD), and A326. Mg(2+) is bound by residues S47 and T181. Positions 173–181 (DVLHSRVKT) are G2 motif. The segment at 196 to 205 (FRMFDVGGQR) is G3 motif. The G4 motif stretch occupies residues 265–272 (VLFLNKKD). Positions 324–329 (TCATDT) are G5 motif.

Belongs to the G-alpha family. G(i/o/t/z) subfamily. As to quaternary structure, g proteins are composed of 3 units; alpha, beta and gamma, respectively GNAT3, GNB1 and GNG13 for Gustducin heterotrimer for bitter taste transduction. The alpha chain contains the guanine nucleotide binding site. Component of the TAS2R14-GNAT3 complex, consisting of TAS2R14, GNAT3, GNB1 and GNG2; within the complex interacts with TAS2R14; this complex plays a role in the perception of bitterness. Gustducin heterotrimer may also be composed of GNAT3, GNB3 and GNG13. In terms of processing, potential N-myristoylation may anchor alpha-subunit to the inner surface of plasma membrane. As to expression, expressed in taste buds (sensory organs of clustered epithelial cells) of the circumvallate and foliate papillae of the tongue at protein level. Expressed in enteroendocrine L cells of the gut. Detected also in spermatozoa.

It is found in the cytoplasm. In terms of biological role, guanine nucleotide-binding protein (G protein) alpha subunit playing a prominent role in bitter and sweet taste transduction as well as in umami (monosodium glutamate, monopotassium glutamate, and inosine monophosphate) taste transduction. Transduction by this alpha subunit involves coupling of specific cell-surface receptors with a cGMP-phosphodiesterase; Activation of phosphodiesterase lowers intracellular levels of cAMP and cGMP which may open a cyclic nucleotide-suppressible cation channel leading to influx of calcium, ultimately leading to release of neurotransmitter. Indeed, denatonium and strychnine induce transient reduction in cAMP and cGMP in taste tissue, whereas this decrease is inhibited by GNAT3 antibody. Gustducin heterotrimer transduces response to bitter and sweet compounds via regulation of phosphodiesterase for alpha subunit, as well as via activation of phospholipase C for beta and gamma subunits, with ultimate increase inositol trisphosphate and increase of intracellular Calcium. GNAT3 can functionally couple to taste receptors to transmit intracellular signal: receptor heterodimer TAS1R2/TAS1R3 senses sweetness and TAS1R1/TAS1R3 transduces umami taste, whereas the T2R family GPCRs such as TAS2R14 act as bitter sensors. Also functions as lumenal sugar sensors in the gut to control the expression of the Na+-glucose transporter SGLT1 in response to dietaty sugar, as well as the secretion of Glucagon-like peptide-1, GLP-1 and glucose-dependent insulinotropic polypeptide, GIP. Thus, may modulate the gut capacity to absorb sugars, with implications in malabsorption syndromes and diet-related disorders including diabetes and obesity. The sequence is that of Guanine nucleotide-binding protein G(t) subunit alpha-3 (GNAT3) from Homo sapiens (Human).